Consider the following 123-residue polypeptide: Small ribosomal subunit protein uS12 (123 aa).

Position 89 is a 3-methylthioaspartic acid (Asp-89).

Belongs to the universal ribosomal protein uS12 family. In terms of assembly, part of the 30S ribosomal subunit. Contacts proteins S8 and S17. May interact with IF1 in the 30S initiation complex.

Functionally, with S4 and S5 plays an important role in translational accuracy. Its function is as follows. Interacts with and stabilizes bases of the 16S rRNA that are involved in tRNA selection in the A site and with the mRNA backbone. Located at the interface of the 30S and 50S subunits, it traverses the body of the 30S subunit contacting proteins on the other side and probably holding the rRNA structure together. The combined cluster of proteins S8, S12 and S17 appears to hold together the shoulder and platform of the 30S subunit. This Mesorhizobium japonicum (strain LMG 29417 / CECT 9101 / MAFF 303099) (Mesorhizobium loti (strain MAFF 303099)) protein is Small ribosomal subunit protein uS12.